The following is a 564-amino-acid chain: Major facilitator superfamily transporter MPN_076 (564 aa).

Helical transmembrane passes span 1–21, 65–85, 89–109, 176–196, 220–240, 249–269, 306–326, 358–378, 404–424, 425–445, 457–477, and 501–521; these read MLWA…FVID, ITLL…KFGY, VMIM…GDPL, IAGY…GTTL, NLWG…FQSV, VFIL…FAWF, MIGM…GGWW, AGLP…YMVF, IVIV…FAFV, AIAT…ILIL, VSVL…AFDI, and GAIA…AIVV.

The protein belongs to the major facilitator superfamily.

It localises to the cell membrane. This Mycoplasma pneumoniae (strain ATCC 29342 / M129 / Subtype 1) (Mycoplasmoides pneumoniae) protein is Major facilitator superfamily transporter MPN_076.